The following is a 327-amino-acid chain: GMP reductase (327 aa).

Cys-176 serves as the catalytic Thioimidate intermediate. NADP(+) is bound at residue 205–228; sequence IIADGGIRTHGDIAKSIRFGASMV.

This sequence belongs to the IMPDH/GMPR family. GuaC type 2 subfamily.

It catalyses the reaction IMP + NH4(+) + NADP(+) = GMP + NADPH + 2 H(+). Functionally, catalyzes the irreversible NADPH-dependent deamination of GMP to IMP. It functions in the conversion of nucleobase, nucleoside and nucleotide derivatives of G to A nucleotides, and in maintaining the intracellular balance of A and G nucleotides. The chain is GMP reductase from Streptococcus gordonii (strain Challis / ATCC 35105 / BCRC 15272 / CH1 / DL1 / V288).